The chain runs to 122 residues: Large ribosomal subunit protein uL14 (122 aa).

This sequence belongs to the universal ribosomal protein uL14 family. In terms of assembly, part of the 50S ribosomal subunit. Forms a cluster with proteins L3 and L19. In the 70S ribosome, L14 and L19 interact and together make contacts with the 16S rRNA in bridges B5 and B8.

In terms of biological role, binds to 23S rRNA. Forms part of two intersubunit bridges in the 70S ribosome. This Paramagnetospirillum magneticum (strain ATCC 700264 / AMB-1) (Magnetospirillum magneticum) protein is Large ribosomal subunit protein uL14.